A 396-amino-acid polypeptide reads, in one-letter code: L-lactate dehydrogenase (396 aa).

In terms of domain architecture, FMN hydroxy acid dehydrogenase spans 1 to 380 (MIISAASDYR…TQDSLVQGLG (380 aa)). A substrate-binding site is contributed by Tyr24. 2 residues coordinate FMN: Ser106 and Gln127. Tyr129 contacts substrate. Thr155 contacts FMN. Arg164 serves as a coordination point for substrate. FMN is bound at residue Lys251. The active-site Proton acceptor is His275. Position 278 (Arg278) interacts with substrate. 306–330 (DSGIRNGLDVVRMIALGADTVLLGR) contacts FMN.

It belongs to the FMN-dependent alpha-hydroxy acid dehydrogenase family. FMN is required as a cofactor.

The protein resides in the cell inner membrane. The catalysed reaction is (S)-lactate + A = pyruvate + AH2. Functionally, catalyzes the conversion of L-lactate to pyruvate. Is coupled to the respiratory chain. The polypeptide is L-lactate dehydrogenase (Shigella boydii serotype 4 (strain Sb227)).